Here is a 397-residue protein sequence, read N- to C-terminus: 1-deoxy-D-xylulose 5-phosphate reductoisomerase (397 aa).

The NADPH site is built by Thr-17, Gly-18, Ser-19, Ile-20, Ala-45, Asn-47, and Asn-130. 1-deoxy-D-xylulose 5-phosphate is bound at residue Lys-131. Residue Glu-132 coordinates NADPH. A Mn(2+)-binding site is contributed by Asp-156. 4 residues coordinate 1-deoxy-D-xylulose 5-phosphate: Ser-157, Glu-158, Ser-182, and His-205. Glu-158 lines the Mn(2+) pocket. Residue Gly-211 coordinates NADPH. Residues Ser-218, Asn-223, Lys-224, and Glu-227 each coordinate 1-deoxy-D-xylulose 5-phosphate. Mn(2+) is bound at residue Glu-227.

This sequence belongs to the DXR family. Mg(2+) is required as a cofactor. The cofactor is Mn(2+).

It carries out the reaction 2-C-methyl-D-erythritol 4-phosphate + NADP(+) = 1-deoxy-D-xylulose 5-phosphate + NADPH + H(+). The protein operates within isoprenoid biosynthesis; isopentenyl diphosphate biosynthesis via DXP pathway; isopentenyl diphosphate from 1-deoxy-D-xylulose 5-phosphate: step 1/6. Functionally, catalyzes the NADPH-dependent rearrangement and reduction of 1-deoxy-D-xylulose-5-phosphate (DXP) to 2-C-methyl-D-erythritol 4-phosphate (MEP). The polypeptide is 1-deoxy-D-xylulose 5-phosphate reductoisomerase (Agrobacterium fabrum (strain C58 / ATCC 33970) (Agrobacterium tumefaciens (strain C58))).